Here is a 99-residue protein sequence, read N- to C-terminus: UPF0320 protein YER188C-A (99 aa).

This sequence belongs to the UPF0320 family.

The sequence is that of UPF0320 protein YER188C-A from Saccharomyces cerevisiae (strain ATCC 204508 / S288c) (Baker's yeast).